The chain runs to 356 residues: S-adenosylmethionine:tRNA ribosyltransferase-isomerase (356 aa).

This sequence belongs to the QueA family. Monomer.

Its subcellular location is the cytoplasm. It carries out the reaction 7-aminomethyl-7-carbaguanosine(34) in tRNA + S-adenosyl-L-methionine = epoxyqueuosine(34) in tRNA + adenine + L-methionine + 2 H(+). It participates in tRNA modification; tRNA-queuosine biosynthesis. Functionally, transfers and isomerizes the ribose moiety from AdoMet to the 7-aminomethyl group of 7-deazaguanine (preQ1-tRNA) to give epoxyqueuosine (oQ-tRNA). The polypeptide is S-adenosylmethionine:tRNA ribosyltransferase-isomerase (Yersinia pseudotuberculosis serotype O:3 (strain YPIII)).